The primary structure comprises 68 residues: Large ribosomal subunit protein bL33c (68 aa).

This sequence belongs to the bacterial ribosomal protein bL33 family.

The protein localises to the plastid. It localises to the chloroplast. In Nymphaea alba (White water-lily), this protein is Large ribosomal subunit protein bL33c.